A 78-amino-acid chain; its full sequence is Acyl carrier protein (78 aa).

A Carrier domain is found at 1 to 76; that stretch reads MALFEDIQAV…DVVKYIEDNK (76 aa). S36 bears the O-(pantetheine 4'-phosphoryl)serine mark.

The protein belongs to the acyl carrier protein (ACP) family. 4'-phosphopantetheine is transferred from CoA to a specific serine of apo-ACP by AcpS. This modification is essential for activity because fatty acids are bound in thioester linkage to the sulfhydryl of the prosthetic group.

It localises to the cytoplasm. It participates in lipid metabolism; fatty acid biosynthesis. Carrier of the growing fatty acid chain in fatty acid biosynthesis. The sequence is that of Acyl carrier protein from Helicobacter pylori (strain G27).